Here is a 160-residue protein sequence, read N- to C-terminus: Ureidoglycolate lyase (160 aa).

Belongs to the ureidoglycolate lyase family. As to quaternary structure, homodimer. The cofactor is Ni(2+).

The enzyme catalyses (S)-ureidoglycolate = urea + glyoxylate. It functions in the pathway nitrogen metabolism; (S)-allantoin degradation. In terms of biological role, catalyzes the catabolism of the allantoin degradation intermediate (S)-ureidoglycolate, generating urea and glyoxylate. Involved in the utilization of allantoin as nitrogen source. This Salmonella enteritidis protein is Ureidoglycolate lyase.